The chain runs to 126 residues: Translation initiation factor 5A (126 aa).

Lys36 is subject to Hypusine.

This sequence belongs to the eIF-5A family.

It is found in the cytoplasm. In terms of biological role, functions by promoting the formation of the first peptide bond. This is Translation initiation factor 5A from Haloarcula marismortui (strain ATCC 43049 / DSM 3752 / JCM 8966 / VKM B-1809) (Halobacterium marismortui).